The primary structure comprises 214 residues: Probable maleylacetoacetate isomerase (214 aa).

In terms of domain architecture, GST N-terminal spans 4–84 (QKPVLYSYWR…YLEETHPDVP (81 aa)). Glutathione is bound by residues 14–19 (SSCSWR), Val56, 68–69 (ES), Gln108, and 112–114 (NLK). The region spanning 89-212 (DPIKRAHARA…HPDNQPDTGL (124 aa)) is the GST C-terminal domain.

Belongs to the GST superfamily. Zeta family. Glutathione is required as a cofactor.

It localises to the cytoplasm. It catalyses the reaction 4-maleylacetoacetate = 4-fumarylacetoacetate. It participates in amino-acid degradation; L-phenylalanine degradation; acetoacetate and fumarate from L-phenylalanine: step 5/6. The chain is Probable maleylacetoacetate isomerase (gst-42) from Caenorhabditis elegans.